A 578-amino-acid polypeptide reads, in one-letter code: MDSSSSVVYVGSSSKSRNFQSKSKGSITSFSIDSRGTKKSMKTLLIPEPEPTSPEVIESSVSSVSAESETPISIIRKKKQSEPRFYSSPTNTFYTEAKQSFTNTEFSECASISTIGIGGIDLEKNGVMIYRGSIGSDVSDESSSSGLSNAAYKPHRDNNDKRWVAIQEVRSRVGSSLEAKDFKLIKKLGGGDIGNVYLAELIGTGVSFAVKVMEKAAIAARKKLVRAQTEKEILQSLDHPFLPTLYSHFETEMNSCLVMEFCPGGDLHSLRQKQRGKYFPEQAARFYVAEVLLAMEYLHMLGIIYRDLKPENVLVREDGHIMLSDFDLSLRCAVSPTLVRFAAITLESKSSSYCIQPTCVDQSSCIVQPDCIQPVCFTPRFLSKGKHRKKSNDMSRQIRPLPELIAEPTSARSMSFVGTHEYLAPEIIKGEGHGSAVDWWTFGIFLYELLFGITPFRGGDNRATLFNVVGQPLRFPEHPNVSFAARDLIRGLLVKEPQHRLAYRRGATEIKQHPFFQSVNWALIRCTSPPQIPQPVKPMDQAHSVRHGFSQGHGHVGYDKPPTVDVKPSGNYLEIDFF.

The span at M1–K24 shows a compositional bias: low complexity. The interval M1–V64 is disordered. Polar residues predominate over residues G25–S34. The segment covering S53 to V64 has biased composition (low complexity). Positions F182–F516 constitute a Protein kinase domain. ATP contacts are provided by residues L188–V196 and K211. The active-site Proton acceptor is the D307. Residues D325–E426 form an activation loop region. Residues I575–F578 carry the PIF motif.

Belongs to the protein kinase superfamily. AGC Ser/Thr protein kinase family. In terms of tissue distribution, expressed predominantly in root tissue with lower levels found in leaf, stem, seed and flower.

It localises to the cell membrane. It catalyses the reaction L-seryl-[protein] + ATP = O-phospho-L-seryl-[protein] + ADP + H(+). The enzyme catalyses L-threonyl-[protein] + ATP = O-phospho-L-threonyl-[protein] + ADP + H(+). In terms of biological role, protein kinase that regulates the auxin transport activity of PIN auxin efflux facilitators by direct phosphorylation. D6PK-mediated PIN phosphorylation promotes auxin transport in the hypocotyl and this is a prerequisite for PHOT1-dependent hypocotyl bending. The protein is Serine/threonine-protein kinase D6PKL3 (D6PKL3) of Arabidopsis thaliana (Mouse-ear cress).